The chain runs to 286 residues: ATP synthase gamma chain (286 aa).

Belongs to the ATPase gamma chain family. As to quaternary structure, F-type ATPases have 2 components, CF(1) - the catalytic core - and CF(0) - the membrane proton channel. CF(1) has five subunits: alpha(3), beta(3), gamma(1), delta(1), epsilon(1). CF(0) has three main subunits: a, b and c.

The protein localises to the cell inner membrane. In terms of biological role, produces ATP from ADP in the presence of a proton gradient across the membrane. The gamma chain is believed to be important in regulating ATPase activity and the flow of protons through the CF(0) complex. This chain is ATP synthase gamma chain, found in Shewanella denitrificans (strain OS217 / ATCC BAA-1090 / DSM 15013).